The following is a 503-amino-acid chain: Maturase K (503 aa).

The protein belongs to the intron maturase 2 family. MatK subfamily.

It is found in the plastid. It localises to the chloroplast. Usually encoded in the trnK tRNA gene intron. Probably assists in splicing its own and other chloroplast group II introns. The protein is Maturase K of Silene latifolia (White campion).